A 598-amino-acid polypeptide reads, in one-letter code: Serine/threonine-protein kinase cot-1 (598 aa).

Composition is skewed to polar residues over residues 1 to 16, 24 to 33, and 99 to 126; these read MDNT…TNDT, TYPTTPSTFP, and PRTS…TQTE. Disordered regions lie at residues 1–46, 80–148, and 163–190; these read MDNT…GGSQ, GSAG…NQKK, and RARE…RESI. A Protein kinase domain is found at 214–518; it reads YQTIKIIGKG…AHEIKSHAFF (305 aa). Residues 220-228 and K243 contribute to the ATP site; that span reads IGKGAFGEV. The Proton acceptor role is filled by D337. Residues 519-598 enclose the AGC-kinase C-terminal domain; the sequence is RGVEFDSLRR…TFKRFDNNFR (80 aa).

This sequence belongs to the protein kinase superfamily. STE Ser/Thr protein kinase family. COT1 subfamily.

The catalysed reaction is L-seryl-[protein] + ATP = O-phospho-L-seryl-[protein] + ADP + H(+). The enzyme catalyses L-threonyl-[protein] + ATP = O-phospho-L-threonyl-[protein] + ADP + H(+). Its function is as follows. Protein kinase required for hyphal elongation. This Neurospora crassa (strain ATCC 24698 / 74-OR23-1A / CBS 708.71 / DSM 1257 / FGSC 987) protein is Serine/threonine-protein kinase cot-1 (cot-1).